Reading from the N-terminus, the 104-residue chain is Matrix Gla protein (104 aa).

The signal sequence occupies residues 1-19 (MKSLLPLAILAALAVATLC). A 4-carboxyglutamate modification is found at Glu21. Phosphoserine occurs at positions 22, 25, and 28. The 47-residue stretch at 51–97 (RAKAQKRVQERNKPAYEINREACDDYKLCERYAMVYGYNAAYNRYFR) folds into the Gla domain. 4-carboxyglutamate is present on residues Glu60, Glu67, and Glu71. A disulfide bridge links Cys73 with Cys79.

It belongs to the osteocalcin/matrix Gla protein family. Requires vitamin K-dependent gamma-carboxylation for its function.

It localises to the secreted. Its function is as follows. Associates with the organic matrix of bone and cartilage. Thought to act as an inhibitor of bone formation. The polypeptide is Matrix Gla protein (Mgp) (Mus musculus (Mouse)).